The primary structure comprises 200 residues: Large ribosomal subunit protein uL4 (200 aa).

Residues 42–65 (TRAQKTRSEVSGGGAKPWRQKGTG) are disordered.

This sequence belongs to the universal ribosomal protein uL4 family. In terms of assembly, part of the 50S ribosomal subunit.

One of the primary rRNA binding proteins, this protein initially binds near the 5'-end of the 23S rRNA. It is important during the early stages of 50S assembly. It makes multiple contacts with different domains of the 23S rRNA in the assembled 50S subunit and ribosome. In terms of biological role, forms part of the polypeptide exit tunnel. The sequence is that of Large ribosomal subunit protein uL4 from Vibrio parahaemolyticus serotype O3:K6 (strain RIMD 2210633).